The primary structure comprises 231 residues: Orotate phosphoribosyltransferase (231 aa).

5-phospho-alpha-D-ribose 1-diphosphate contacts are provided by residues K27, 79–80 (YK), R106, K107, K110, H112, and 133–141 (DDVMTAGTA). 2 residues coordinate orotate: T137 and R166.

This sequence belongs to the purine/pyrimidine phosphoribosyltransferase family. PyrE subfamily. Homodimer. Requires Mg(2+) as cofactor.

It catalyses the reaction orotidine 5'-phosphate + diphosphate = orotate + 5-phospho-alpha-D-ribose 1-diphosphate. It participates in pyrimidine metabolism; UMP biosynthesis via de novo pathway; UMP from orotate: step 1/2. In terms of biological role, catalyzes the transfer of a ribosyl phosphate group from 5-phosphoribose 1-diphosphate to orotate, leading to the formation of orotidine monophosphate (OMP). The sequence is that of Orotate phosphoribosyltransferase from Bifidobacterium animalis subsp. lactis (strain AD011).